The sequence spans 60 residues: Defensin-like protein 4 (60 aa).

4 disulfide bridges follow: C4–C56, C17–C41, C26–C51, and C30–C53.

It belongs to the DEFL family. Protease inhibitor I18 (RTI/MTI-2) subfamily.

The protein resides in the secreted. Its function is as follows. Inhibits trypsin and chymotrypsin. This chain is Defensin-like protein 4, found in Brassica napus (Rape).